A 144-amino-acid polypeptide reads, in one-letter code: 3-dehydroquinate dehydratase (144 aa).

Residue Tyr-24 is the Proton acceptor of the active site. Substrate-binding residues include Asn-73, His-79, and Asp-86. Residue His-99 is the Proton donor of the active site. Substrate-binding positions include 100–101 (LS) and Arg-110.

This sequence belongs to the type-II 3-dehydroquinase family. Homododecamer.

The enzyme catalyses 3-dehydroquinate = 3-dehydroshikimate + H2O. It participates in metabolic intermediate biosynthesis; chorismate biosynthesis; chorismate from D-erythrose 4-phosphate and phosphoenolpyruvate: step 3/7. Catalyzes a trans-dehydration via an enolate intermediate. In Shewanella sp. (strain MR-4), this protein is 3-dehydroquinate dehydratase.